Consider the following 239-residue polypeptide: Lipoprotein-releasing system ATP-binding protein LolD (239 aa).

Residues 14–239 (IRAERLGKTY…KLRELAPSAV (226 aa)) enclose the ABC transporter domain. 50-57 (GASGAGKS) serves as a coordination point for ATP.

The protein belongs to the ABC transporter superfamily. Lipoprotein translocase (TC 3.A.1.125) family. In terms of assembly, the complex is composed of two ATP-binding proteins (LolD) and two transmembrane proteins (LolC and LolE).

Its subcellular location is the cell inner membrane. Part of the ABC transporter complex LolCDE involved in the translocation of mature outer membrane-directed lipoproteins, from the inner membrane to the periplasmic chaperone, LolA. Responsible for the formation of the LolA-lipoprotein complex in an ATP-dependent manner. The chain is Lipoprotein-releasing system ATP-binding protein LolD from Xanthomonas campestris pv. campestris (strain 8004).